Consider the following 222-residue polypeptide: NAD(P)H-hydrate epimerase (222 aa).

The YjeF N-terminal domain occupies 9–209; sequence MQQIDSYTIE…DIGLRLPEDF (201 aa). Residue 57–61 coordinates (6S)-NADPHX; sequence NNGAD. Residues asparagine 58 and aspartate 119 each contribute to the K(+) site. (6S)-NADPHX contacts are provided by residues 123 to 129 and aspartate 152; that span reads GVGLNNT. Threonine 155 serves as a coordination point for K(+).

It belongs to the NnrE/AIBP family. Requires K(+) as cofactor.

The enzyme catalyses (6R)-NADHX = (6S)-NADHX. It catalyses the reaction (6R)-NADPHX = (6S)-NADPHX. Catalyzes the epimerization of the S- and R-forms of NAD(P)HX, a damaged form of NAD(P)H that is a result of enzymatic or heat-dependent hydration. This is a prerequisite for the S-specific NAD(P)H-hydrate dehydratase to allow the repair of both epimers of NAD(P)HX. The protein is NAD(P)H-hydrate epimerase of Leuconostoc citreum (strain KM20).